Here is a 375-residue protein sequence, read N- to C-terminus: Chaperone protein DnaJ (375 aa).

Positions 5 to 70 (DFYEVLGVEK…QKRAQYDQFG (66 aa)) constitute a J domain. The segment at 134-216 (GVEKEVSITK…CKGKGTVRKQ (83 aa)) adopts a CR-type zinc-finger fold. Positions 147, 150, 164, 167, 190, 193, 204, and 207 each coordinate Zn(2+). CXXCXGXG motif repeat units lie at residues 147–154 (CETCTGTG), 164–171 (CPKCNGSG), 190–197 (CDMCGGKG), and 204–211 (CSDCKGKG).

This sequence belongs to the DnaJ family. Homodimer. Requires Zn(2+) as cofactor.

The protein resides in the cytoplasm. In terms of biological role, participates actively in the response to hyperosmotic and heat shock by preventing the aggregation of stress-denatured proteins and by disaggregating proteins, also in an autonomous, DnaK-independent fashion. Unfolded proteins bind initially to DnaJ; upon interaction with the DnaJ-bound protein, DnaK hydrolyzes its bound ATP, resulting in the formation of a stable complex. GrpE releases ADP from DnaK; ATP binding to DnaK triggers the release of the substrate protein, thus completing the reaction cycle. Several rounds of ATP-dependent interactions between DnaJ, DnaK and GrpE are required for fully efficient folding. Also involved, together with DnaK and GrpE, in the DNA replication of plasmids through activation of initiation proteins. In Clostridium tetani (strain Massachusetts / E88), this protein is Chaperone protein DnaJ.